A 219-amino-acid chain; its full sequence is Uracil-DNA glycosylase (219 aa).

The active-site Proton acceptor is the Asp-59.

The protein belongs to the uracil-DNA glycosylase (UDG) superfamily. UNG family.

The protein localises to the cytoplasm. It catalyses the reaction Hydrolyzes single-stranded DNA or mismatched double-stranded DNA and polynucleotides, releasing free uracil.. In terms of biological role, excises uracil residues from the DNA which can arise as a result of misincorporation of dUMP residues by DNA polymerase or due to deamination of cytosine. The polypeptide is Uracil-DNA glycosylase (Macrococcus caseolyticus (strain JCSC5402) (Macrococcoides caseolyticum)).